A 384-amino-acid polypeptide reads, in one-letter code: DNA replication and repair protein RecF (384 aa).

ATP is bound at residue 43 to 50 (GENGSGKT).

This sequence belongs to the RecF family.

The protein localises to the cytoplasm. In terms of biological role, the RecF protein is involved in DNA metabolism; it is required for DNA replication and normal SOS inducibility. RecF binds preferentially to single-stranded, linear DNA. It also seems to bind ATP. The polypeptide is DNA replication and repair protein RecF (Brucella suis biovar 1 (strain 1330)).